The following is a 1379-amino-acid chain: DNA-directed RNA polymerase subunit beta'' (1379 aa).

Zn(2+)-binding residues include C220, C293, C300, and C303.

The protein belongs to the RNA polymerase beta' chain family. RpoC2 subfamily. In terms of assembly, in plastids the minimal PEP RNA polymerase catalytic core is composed of four subunits: alpha, beta, beta', and beta''. When a (nuclear-encoded) sigma factor is associated with the core the holoenzyme is formed, which can initiate transcription. Zn(2+) is required as a cofactor.

The protein resides in the plastid. It is found in the chloroplast. It carries out the reaction RNA(n) + a ribonucleoside 5'-triphosphate = RNA(n+1) + diphosphate. Functionally, DNA-dependent RNA polymerase catalyzes the transcription of DNA into RNA using the four ribonucleoside triphosphates as substrates. In Barbarea verna (Land cress), this protein is DNA-directed RNA polymerase subunit beta''.